The sequence spans 84 residues: Sulfur carrier protein TusA (84 aa).

The Cysteine persulfide intermediate role is filled by Cys21.

Belongs to the sulfur carrier protein TusA family.

Its subcellular location is the cytoplasm. In terms of biological role, sulfur carrier protein which probably makes part of a sulfur-relay system. In Pseudomonas syringae pv. syringae (strain B728a), this protein is Sulfur carrier protein TusA.